Reading from the N-terminus, the 513-residue chain is ATP synthase subunit alpha (513 aa).

An ATP-binding site is contributed by 169 to 176; it reads GDRQTGKT.

Belongs to the ATPase alpha/beta chains family. As to quaternary structure, F-type ATPases have 2 components, CF(1) - the catalytic core - and CF(0) - the membrane proton channel. CF(1) has five subunits: alpha(3), beta(3), gamma(1), delta(1), epsilon(1). CF(0) has three main subunits: a(1), b(2) and c(9-12). The alpha and beta chains form an alternating ring which encloses part of the gamma chain. CF(1) is attached to CF(0) by a central stalk formed by the gamma and epsilon chains, while a peripheral stalk is formed by the delta and b chains.

The protein resides in the cell inner membrane. It catalyses the reaction ATP + H2O + 4 H(+)(in) = ADP + phosphate + 5 H(+)(out). Functionally, produces ATP from ADP in the presence of a proton gradient across the membrane. The alpha chain is a regulatory subunit. The sequence is that of ATP synthase subunit alpha from Aliivibrio fischeri (strain ATCC 700601 / ES114) (Vibrio fischeri).